The primary structure comprises 592 residues: uncharacterized protein (592 aa).

6 consecutive transmembrane segments (helical) span residues 12-32 (IWILQTLAITSVVFSFGIFLL), 58-78 (PILFFLLIVAMTLLSVRISLV), 102-122 (MGLFCVIAASSVSAALVSYYL), 191-211 (ISYTILLWGLAGPMIVLGVEI), 214-234 (MMVFLVFGYVIFTTLIAFWLG), and 299-319 (FSGFNLVVSQISVVFPLLIQV). Residues 58-358 (PILFFLLIVA…FRSTYDNFAS (301 aa)) form the ABC transmembrane type-1 domain. The ABC transporter domain occupies 391-592 (VIFKNLSIQN…LQDKGQWQVL (202 aa)). 424–431 (GKSGAGKT) provides a ligand contact to ATP.

It belongs to the ABC transporter superfamily.

It localises to the cell inner membrane. This is an uncharacterized protein from Haemophilus influenzae (strain ATCC 51907 / DSM 11121 / KW20 / Rd).